A 265-amino-acid chain; its full sequence is Small ribosomal subunit protein uS3 (265 aa).

A KH type-2 domain is found at 43-111 (IRTMLKTSLD…QIQLNILEVK (69 aa)). A disordered region spans residues 217-265 (AREQANQKSSRPERRNDRSDGRTGDRRTNAPRTAPAAEAAPVAAAGVEA). Residues 226-244 (SRPERRNDRSDGRTGDRRT) show a composition bias toward basic and acidic residues. The segment covering 250-265 (APAAEAAPVAAAGVEA) has biased composition (low complexity).

It belongs to the universal ribosomal protein uS3 family. In terms of assembly, part of the 30S ribosomal subunit. Forms a tight complex with proteins S10 and S14.

In terms of biological role, binds the lower part of the 30S subunit head. Binds mRNA in the 70S ribosome, positioning it for translation. This is Small ribosomal subunit protein uS3 from Clavibacter michiganensis subsp. michiganensis (strain NCPPB 382).